We begin with the raw amino-acid sequence, 260 residues long: Thiazole synthase (260 aa).

Residue Lys96 is the Schiff-base intermediate with DXP of the active site. Residues Gly157, 184–185 (AG), and 206–207 (NT) each bind 1-deoxy-D-xylulose 5-phosphate.

Belongs to the ThiG family. Homotetramer. Forms heterodimers with either ThiH or ThiS.

Its subcellular location is the cytoplasm. The enzyme catalyses [ThiS sulfur-carrier protein]-C-terminal-Gly-aminoethanethioate + 2-iminoacetate + 1-deoxy-D-xylulose 5-phosphate = [ThiS sulfur-carrier protein]-C-terminal Gly-Gly + 2-[(2R,5Z)-2-carboxy-4-methylthiazol-5(2H)-ylidene]ethyl phosphate + 2 H2O + H(+). It participates in cofactor biosynthesis; thiamine diphosphate biosynthesis. Catalyzes the rearrangement of 1-deoxy-D-xylulose 5-phosphate (DXP) to produce the thiazole phosphate moiety of thiamine. Sulfur is provided by the thiocarboxylate moiety of the carrier protein ThiS. In vitro, sulfur can be provided by H(2)S. The polypeptide is Thiazole synthase (Rhodopseudomonas palustris (strain BisB18)).